Reading from the N-terminus, the 130-residue chain is Small ribosomal subunit protein uS8 (130 aa).

It belongs to the universal ribosomal protein uS8 family. As to quaternary structure, part of the 30S ribosomal subunit. Contacts proteins S5 and S12.

One of the primary rRNA binding proteins, it binds directly to 16S rRNA central domain where it helps coordinate assembly of the platform of the 30S subunit. This is Small ribosomal subunit protein uS8 from Pasteurella multocida (strain Pm70).